Here is a 68-residue protein sequence, read N- to C-terminus: Molybdenum-pterin-binding protein 2 (68 aa).

In terms of domain architecture, Mop spans serine 2 to alanine 68.

Binds one mole of molybdenum per mole of protein and contains a pterin. The sequence is that of Molybdenum-pterin-binding protein 2 (mopII) from Clostridium pasteurianum.